We begin with the raw amino-acid sequence, 468 residues long: Phosphomethylpyrimidine synthase (468 aa).

Residues N82, M111, Y141, H177, S197–G199, D238–R241, and E277 contribute to the substrate site. A Zn(2+)-binding site is contributed by H281. Y304 is a substrate binding site. Zn(2+) is bound at residue H345. 3 residues coordinate [4Fe-4S] cluster: C425, C428, and C433.

Belongs to the ThiC family. [4Fe-4S] cluster serves as cofactor.

It catalyses the reaction 5-amino-1-(5-phospho-beta-D-ribosyl)imidazole + S-adenosyl-L-methionine = 4-amino-2-methyl-5-(phosphooxymethyl)pyrimidine + CO + 5'-deoxyadenosine + formate + L-methionine + 3 H(+). It participates in cofactor biosynthesis; thiamine diphosphate biosynthesis. Its function is as follows. Catalyzes the synthesis of the hydroxymethylpyrimidine phosphate (HMP-P) moiety of thiamine from aminoimidazole ribotide (AIR) in a radical S-adenosyl-L-methionine (SAM)-dependent reaction. The polypeptide is Phosphomethylpyrimidine synthase (Prochlorococcus marinus (strain SARG / CCMP1375 / SS120)).